The sequence spans 190 residues: Glutamyl-tRNA(Gln) amidotransferase subunit C, mitochondrial (190 aa).

The transit peptide at 1-96 directs the protein to the mitochondrion; that stretch reads MISFQIILQQ…VLNLKQAVRF (96 aa). The disordered stretch occupies residues 28–57; the sequence is KSNSTAVGSSDEDDEIYVPKKPIPSPIDQS.

The protein belongs to the GatC family. In terms of assembly, subunit of the heterotrimeric GatCAB amidotransferase (AdT) complex, composed of A, B and C subunits.

It localises to the mitochondrion. It catalyses the reaction L-glutamyl-tRNA(Gln) + L-glutamine + ATP + H2O = L-glutaminyl-tRNA(Gln) + L-glutamate + ADP + phosphate + H(+). In terms of biological role, allows the formation of correctly charged Gln-tRNA(Gln) through the transamidation of misacylated Glu-tRNA(Gln) in the mitochondria. The reaction takes place in the presence of glutamine and ATP through an activated gamma-phospho-Glu-tRNA(Gln). This Loa loa (Eye worm) protein is Glutamyl-tRNA(Gln) amidotransferase subunit C, mitochondrial.